The primary structure comprises 549 residues: Cation/acetate symporter ActP (549 aa).

13 consecutive transmembrane segments (helical) span residues 33–53 (WQAIIMFLIFVVFTLGITYWA), 77–97 (LAIAGDYMSAASFLGISALVF), 103–123 (GLIYSLGFLVGWPIILFLIAE), 148–168 (ILSACGSLVVVALYLIAQMVG), 183–203 (IAVVLVGVLMMMYVLFGGMLA), 206–226 (WVQIIKAVLLLFGASFMAFMV), 262–282 (ISALSLGLGLMFGTAGLPHIL), 303–323 (GFMGYFYILTFIIGFGAIMLV), 355–375 (LFLGFISAVAFATILAVVAGL), 404–424 (VSKITVLILGVIAIILGVLFE), 428–448 (IAFMVGLAFAIAASCNFPIIL), 464–484 (GGWLGLITAVVLMILGPTIWV), and 493–513 (IFPYEYPALFSISVAFLGIWF).

The protein belongs to the sodium:solute symporter (SSF) (TC 2.A.21) family.

The protein resides in the cell inner membrane. Transports acetate. The chain is Cation/acetate symporter ActP from Escherichia coli O6:K15:H31 (strain 536 / UPEC).